The following is a 1396-amino-acid chain: DNA-directed RNA polymerase subunit beta (1396 aa).

Belongs to the RNA polymerase beta chain family. The RNAP catalytic core consists of 2 alpha, 1 beta, 1 beta' and 1 omega subunit. When a sigma factor is associated with the core the holoenzyme is formed, which can initiate transcription.

The enzyme catalyses RNA(n) + a ribonucleoside 5'-triphosphate = RNA(n+1) + diphosphate. Its function is as follows. DNA-dependent RNA polymerase catalyzes the transcription of DNA into RNA using the four ribonucleoside triphosphates as substrates. The chain is DNA-directed RNA polymerase subunit beta from Erythrobacter litoralis (strain HTCC2594).